Here is a 65-residue protein sequence, read N- to C-terminus: Large ribosomal subunit protein bL35 (65 aa).

This sequence belongs to the bacterial ribosomal protein bL35 family.

This chain is Large ribosomal subunit protein bL35, found in Yersinia pseudotuberculosis serotype O:1b (strain IP 31758).